The primary structure comprises 274 residues: Penicillin-insensitive murein endopeptidase (274 aa).

An N-terminal signal peptide occupies residues 1-19; sequence MKKTAIALLAWFVSSASLA. Disulfide bonds link Cys44–Cys265, Cys187–Cys235, and Cys216–Cys223. Zn(2+) is bound by residues His110, His113, Asp120, Asp147, and His150. The segment at 225–274 is disordered; it reads DQPLPPPGDGCGAELQSWFEPPKPGTTKPEKKTPPPLPPSCQALLDEHVL.

The protein belongs to the peptidase M74 family. Dimer. Zn(2+) serves as cofactor.

The protein resides in the periplasm. Its function is as follows. Murein endopeptidase that cleaves the D-alanyl-meso-2,6-diamino-pimelyl amide bond that connects peptidoglycan strands. Likely plays a role in the removal of murein from the sacculus. This Salmonella paratyphi A (strain ATCC 9150 / SARB42) protein is Penicillin-insensitive murein endopeptidase.